The chain runs to 83 residues: Greglin (83 aa).

A phosphoserine mark is found at Ser8, Ser11, and Ser15. Cystine bridges form between Cys21–Cys55, Cys25–Cys48, Cys33–Cys69, and Cys53–Cys76.

In terms of biological role, serine protease inhibitor. Inhibits porcine pancreatic elastase with a Ki of 58.3 nM, human neutrophil elastase with a Ki of 3.6 nM, cathepsin G with a Ki of 153.5 nM, chymotrypsin with a Ki of 26.7 nM and subtilisin with a Ki of 0.68 nM. Does not inhibit neutrophil protease 3 or pancreatic trypsin. The protein is Greglin of Schistocerca gregaria (Desert locust).